The following is a 372-amino-acid chain: 4-hydroxy-3-methylbut-2-en-1-yl diphosphate synthase (flavodoxin) (372 aa).

Residues Cys270, Cys273, Cys305, and Glu312 each coordinate [4Fe-4S] cluster.

Belongs to the IspG family. [4Fe-4S] cluster serves as cofactor.

The catalysed reaction is (2E)-4-hydroxy-3-methylbut-2-enyl diphosphate + oxidized [flavodoxin] + H2O + 2 H(+) = 2-C-methyl-D-erythritol 2,4-cyclic diphosphate + reduced [flavodoxin]. The protein operates within isoprenoid biosynthesis; isopentenyl diphosphate biosynthesis via DXP pathway; isopentenyl diphosphate from 1-deoxy-D-xylulose 5-phosphate: step 5/6. Functionally, converts 2C-methyl-D-erythritol 2,4-cyclodiphosphate (ME-2,4cPP) into 1-hydroxy-2-methyl-2-(E)-butenyl 4-diphosphate. The polypeptide is 4-hydroxy-3-methylbut-2-en-1-yl diphosphate synthase (flavodoxin) (Enterobacter sp. (strain 638)).